A 178-amino-acid chain; its full sequence is C-phycoerythrin class 2 subunit beta (178 aa).

Residues Cys50 and Cys61 each contribute to the phycourobilin site. Residues Cys82 and Cys159 each coordinate (2R,3E)-phycoerythrobilin.

It belongs to the phycobiliprotein family. Heterodimer of an alpha and a beta chain. Contains two covalently linked phycoerythrobilin chromophores and one covalently linked phycourobilin chromophore.

Its subcellular location is the cellular thylakoid membrane. In terms of biological role, light-harvesting photosynthetic bile pigment-protein from the phycobiliprotein complex. The protein is C-phycoerythrin class 2 subunit beta (mpeB) of Synechococcus sp. (strain WH8020).